The following is a 335-amino-acid chain: dTDP-glucose 4,6-dehydratase (335 aa).

Residues 11 to 12 (FI), 38 to 41 (DKLT), 61 to 62 (DI), 81 to 85 (FAAET), and T100 each bind NAD(+). Residue T85 participates in substrate binding. T125 contributes to the substrate binding site. Catalysis depends on D126, which acts as the Proton donor. Catalysis depends on proton acceptor residues E127 and Y149. Residue 149–153 (YSASK) coordinates NAD(+). A substrate-binding site is contributed by N178. NAD(+) is bound at residue N179. Residues 188–189 (KI), 204–206 (PLY), R213, N248, and 271–275 (DRKGH) each bind substrate.

It belongs to the NAD(P)-dependent epimerase/dehydratase family. dTDP-glucose dehydratase subfamily. The cofactor is NAD(+).

It carries out the reaction dTDP-alpha-D-glucose = dTDP-4-dehydro-6-deoxy-alpha-D-glucose + H2O. It participates in antibiotic biosynthesis. In terms of biological role, involved in the biosynthesis of the two 2,6-deoxysugars, dTDP-L-oleandrose and dTDP-D-desosamine, attached to the macrolactone ring oleandolide to produce the aglycone antibiotic oleandomycin. Catalyzes the dehydration of dTDP-D-glucose to form dTDP-6-deoxy-D-xylo-4-hexulose via a three-step process involving oxidation, dehydration and reduction. The polypeptide is dTDP-glucose 4,6-dehydratase (Streptomyces antibioticus).